We begin with the raw amino-acid sequence, 141 residues long: Hemoglobin subunit alpha-A (141 aa).

In terms of domain architecture, Globin spans 1–141 (VLSAADKTNV…VGAVLTAKYR (141 aa)). His58 is a binding site for O2. Heme b is bound at residue His87.

Belongs to the globin family. Heterotetramer of two alpha chains and two beta chains. Red blood cells.

In terms of biological role, involved in oxygen transport from the lung to the various peripheral tissues. This chain is Hemoglobin subunit alpha-A (HBAA), found in Cygnus olor (Mute swan).